The chain runs to 265 residues: Protein N-terminal and lysine N-methyltransferase EFM7 (265 aa).

The disordered stretch occupies residues 1 to 25 (MSSDHEEDSLYGATELFGEPDGFYE). S-adenosyl-L-methionine contacts are provided by residues Trp67, 93-95 (GAA), Asp115, Trp152, and Ser176.

It belongs to the class I-like SAM-binding methyltransferase superfamily. EFM7 family.

The protein resides in the cytoplasm. Its function is as follows. S-adenosyl-L-methionine-dependent protein methyltransferase that trimethylates the N-terminal glycine 'Gly-2' of elongation factor 1-alpha, before also catalyzing the mono- and dimethylation of 'Lys-3'. The chain is Protein N-terminal and lysine N-methyltransferase EFM7 from Eremothecium gossypii (strain ATCC 10895 / CBS 109.51 / FGSC 9923 / NRRL Y-1056) (Yeast).